The sequence spans 3707 residues: Basement membrane-specific heparan sulfate proteoglycan core protein (3707 aa).

The signal sequence occupies residues 1–21 (MGQRAVGSLLLGLLLHARLLA). Residues S65, S71, and S76 are each glycosylated (O-linked (Xyl...) (heparan sulfate) serine). Residues 80 to 191 (QMVYFRALVN…WGFKFRRLGT (112 aa)) form the SEA domain. An N-linked (GlcNAc...) asparagine glycan is attached at N89. LDL-receptor class A domains lie at 195 to 234 (FPRV…ELNC), 281 to 319 (GPSA…ELGC), 320 to 359 (ASPP…EANC), and 360 to 403 (SVKQ…EFGC). 13 disulfides stabilise this stretch: C199–C212, C206–C225, C219–C234, C285–C297, C292–C310, C304–C319, C325–C337, C332–C350, C344–C359, C368–C381, C375–C394, C388–C403, and C428–C479. The N-linked (GlcNAc...) asparagine glycan is linked to N358. In terms of domain architecture, Ig-like C2-type 1 spans 404–504 (MPPQVVTPPQ…VLELVPQRGP (101 aa)). A Laminin EGF-like 1; first part domain is found at 521–530 (CFCFGVTNVC). Positions 538–730 (DQIRLSFDQP…IHGRAHSVEE (193 aa)) constitute a Laminin IV type A 1 domain. N-linked (GlcNAc...) asparagine glycosylation occurs at N554. The region spanning 731 to 763 (CRCPIGYSGLSCESCDAHFTRVPGGPYLGTCSG) is the Laminin EGF-like 1; second part domain. Disulfide bonds link C764–C773, C766–C780, C783–C792, C795–C811, C814–C829, C816–C839, C842–C851, C854–C869, C879–C892, C894–C903, and C906–C921. Laminin EGF-like domains follow at residues 764–813 (CNCN…ACRP) and 814–871 (CPCP…KCRP). Residues 879 to 923 (CDERGSLGTSGETCRCKNNVVGRLCNECSDGSFHLSKQNPDGCLK) enclose the Laminin EGF-like 4; truncated domain. Positions 924 to 933 (CFCMGVSRQC) constitute a Laminin EGF-like 5; first part domain. Residues 941 to 1125 (AQVLGASEQP…GQDSAREVEQ (185 aa)) enclose the Laminin IV type A 2 domain. Positions 1126–1158 (CTCPPGYRGPSCQDCDTGYTRVPSGLYLGTCER) constitute a Laminin EGF-like 5; second part domain. 12 cysteine pairs are disulfide-bonded: C1159/C1168, C1161/C1175, C1178/C1187, C1190/C1206, C1209/C1224, C1211/C1234, C1237/C1246, C1249/C1263, C1275/C1287, C1277/C1293, C1295/C1304, and C1307/C1322. Laminin EGF-like domains are found at residues 1159 to 1208 (CNCH…DCQP), 1209 to 1265 (CPCY…PCHR), and 1275 to 1324 (CGCD…GCLP). A Laminin EGF-like 9; first part domain is found at 1325–1334 (CFCMGVTQQC). Residues 1344–1529 (ISTHFAPGDF…SGPRALEVEE (186 aa)) enclose the Laminin IV type A 3 domain. The Laminin EGF-like 9; second part domain occupies 1530–1562 (CRCPPGYVGLSCQDCAPGYTRTGSGLYLGQCEL). 8 disulfide bridges follow: C1563–C1572, C1565–C1579, C1582–C1591, C1594–C1610, C1613–C1628, C1615–C1638, C1641–C1650, and C1653–C1668. Laminin EGF-like domains are found at residues 1563–1612 (CECN…DCQP) and 1613–1670 (CACP…RCQP). 14 Ig-like C2-type domains span residues 1677 to 1771 (EVQI…KPIM), 1772 to 1865 (VTVE…STAP), 1866 to 1954 (VASI…GGSG), 1955 to 2049 (PRVQ…PAPA), 2050 to 2148 (SPAP…PGVV), 2149 to 2244 (PPIR…PAPG), 2245 to 2343 (LAQP…RLRS), 2344 to 2436 (PVIS…PPTV), 2437 to 2532 (SVLP…APGT), 2533 to 2619 (PQVQ…VESP), 2620 to 2720 (PYAT…GGST), 2721 to 2809 (PTVQ…ALPS), 2810 to 2895 (VLIN…LVQA), and 2896 to 2980 (LPQI…LQVP). The segment at 1713–1733 (DGRPLPSSAQQRHQGSELHFP) is disordered. Disulfide bonds link C1792–C1839, C1886–C1932, and C1976–C2021. Residues 2039–2061 (SPSTNSPPAPASPAPIRIESSSS) form a disordered region. The span at 2052–2061 (APIRIESSSS) shows a compositional bias: low complexity. Disulfide bonds link C2073/C2118, C2170/C2215, and C2268/C2313. N-linked (GlcNAc...) asparagine glycans are attached at residues N2336, N2394, and N2427. Residues C2365 and C2413 are joined by a disulfide bond. 2 cysteine pairs are disulfide-bonded: C2456–C2506 and C2554–C2599. Residue N2600 is glycosylated (N-linked (GlcNAc...) asparagine). C2641 and C2686 are disulfide-bonded. Cystine bridges form between C2831–C2876 and C2917–C2962. The 179-residue stretch at 2984–3162 (IPYFTQTPYS…VNLTTHGISH (179 aa)) folds into the Laminin G-like 1 domain. N3098 and N3154 each carry an N-linked (GlcNAc...) asparagine glycan. 5 disulfides stabilise this stretch: C3137–C3163, C3166–C3177, C3171–C3187, C3204–C3216, and C3229–C3238. Residues 3163 to 3241 (CPTCQDRPCQ…GRSGVRCEEG (79 aa)) enclose the EGF-like domain. The Laminin G-like 2 domain maps to 3245–3425 (TTPSMSGAGS…VGQCYDSSPC (181 aa)). N3385 carries N-linked (GlcNAc...) asparagine glycosylation. Intrachain disulfides connect C3393–C3419, C3425–C3436, C3430–C3446, C3448–C3457, C3464–C3476, C3470–C3481, and C3483–C3492. An O-linked (Xyl...) (chondroitin sulfate) serine glycan is attached at S3510. The 188-residue stretch at 3518–3705 (QYGAYFYDNG…AQAGANTRPC (188 aa)) folds into the Laminin G-like 3 domain. Ca(2+) is bound by residues D3574 and L3591. The interval 3615–3617 (LRE) is mediates motor neuron attachment. Residues A3641 and N3643 each contribute to the Ca(2+) site. C3671 and C3705 are joined by a disulfide. Residues 3680–3707 (ARPGAPPPQPLDLQHRAQAGANTRPCPS) are disordered.

As to quaternary structure, has a strong tendency to aggregate in dimers or stellate structures. Interacts with other basement membrane components such as laminin, prolargin and collagen type IV. Interacts with COL13A1. Interacts with FGFBP1. Interacts with VWA1. Interacts (via C-terminus) with ECM1 (via C-terminus). Interacts with SVEP1. Proteolytic processing produces the C-terminal angiogenic peptide, endorepellin. This peptide can be further processed to produce the LG3 peptide. Post-translationally, O-glycosylated. Contains three heparan sulfate chains. Also contains chondroitin sulfate.

The protein resides in the secreted. The protein localises to the extracellular space. Its subcellular location is the extracellular matrix. It localises to the basement membrane. Integral component of basement membranes. Component of the glomerular basement membrane (GBM), responsible for the fixed negative electrostatic membrane charge, and which provides a barrier which is both size- and charge-selective. It serves as an attachment substrate for cells. Plays essential roles in vascularization. Critical for normal heart development and for regulating the vascular response to injury. Also required for avascular cartilage development. Its function is as follows. Anti-angiogenic and anti-tumor peptide that inhibits endothelial cell migration, collagen-induced endothelial tube morphogenesis and blood vessel growth in the chorioallantoic membrane. Blocks endothelial cell adhesion to fibronectin and type I collagen. Anti-tumor agent in neovascularization. Interaction with its ligand, integrin alpha2/beta1, is required for the anti-angiogenic properties. Evokes a reduction in phosphorylation of receptor tyrosine kinases via alpha2/beta1 integrin-mediated activation of the tyrosine phosphatase, PTPN6. Functionally, has anti-angiogenic properties that require binding of calcium ions for full activity. The sequence is that of Basement membrane-specific heparan sulfate proteoglycan core protein (Hspg2) from Mus musculus (Mouse).